The sequence spans 330 residues: G-protein coupled receptor 3 (330 aa).

Over 1-42 the chain is Extracellular; that stretch reads MMWGAGSSMAWFSAGSGSVNVSSVDPVEEPTGPATLLPSPRA. A glycan (N-linked (GlcNAc...) asparagine) is linked at N20. Residues 43-62 traverse the membrane as a helical segment; the sequence is WDVVLCISGTLVSCENALVV. The Cytoplasmic segment spans residues 63 to 74; sequence AIIVGTPAFRAP. The helical transmembrane segment at 75–98 threads the bilayer; that stretch reads MFLLVGSLAVADLLAGLGLVLHFA. Residues 99-110 are Extracellular-facing; that stretch reads ADFCIGSPEMSL. The helical transmembrane segment at 111–132 threads the bilayer; the sequence is MLVGVLAMAFTASIGSLLAITV. The Cytoplasmic portion of the chain corresponds to 133 to 153; the sequence is DRYLSLYNALTYYSETTVTRT. A helical transmembrane segment spans residues 154-173; that stretch reads YVMLALVWVGALGLGLVPVL. At 174-198 the chain is on the extracellular side; it reads AWNCRDGLTTCGVVYPLSKNHLVVL. Residues 199 to 217 traverse the membrane as a helical segment; sequence AIAFFMVFGIMLQLYAQIC. Residues 218-245 are Cytoplasmic-facing; the sequence is RIVCRHAQQIALQRHLLPASHYVATRKG. The helical transmembrane segment at 246 to 272 threads the bilayer; sequence IATLAVVLGAFAACWLPFTVYCLLGDA. Residues 273–277 are Extracellular-facing; the sequence is DSPRL. A helical transmembrane segment spans residues 278–299; it reads YTYLTLLPATYNSMINPVIYAF. Residues 300 to 330 are Cytoplasmic-facing; the sequence is RNQDVQKVLWAICCCCSTSKIPFRSRSPSDV. Residue C313 is the site of S-palmitoyl cysteine attachment. A phosphoserine mark is found at S324, S326, and S328.

This sequence belongs to the G-protein coupled receptor 1 family. In terms of tissue distribution, expressed in both the forebrain and hindbrain, with the highest level in habenula. Lower level expression in the testis. Expressed in several metabolically active peripheral tissues, although at lower levels than in the central nervous system (CNS).

Its subcellular location is the cell membrane. In terms of biological role, constitutively active G-protein coupled receptor that maintains high 3'-5'-cyclic adenosine monophosphate (cAMP) levels that a plays a role in serveral processes including meiotic arrest in oocytes or neuronal development via activation of numerous intracellular signaling pathways. Acts as an essential activator of thermogenic adipocytes and drives thermogenesis via its intrinsic G(s)-coupling activity without the requirement of a ligand. Has a potential role in modulating a number of brain functions, including behavioral responses to stress, amyloid-beta peptide generation in neurons. Stimulates neurite outgrowth in cerebellar granular neurons modulated via PKA, ERK, and most strongly PI3K-mediated signaling pathways. This is G-protein coupled receptor 3 (Gpr3) from Mus musculus (Mouse).